The primary structure comprises 77 residues: Translation initiation factor IF-1, chloroplastic (77 aa).

The S1-like domain occupies 1–71 (MKEQKLIHEG…TKGRIIYRLR (71 aa)).

It belongs to the IF-1 family. As to quaternary structure, component of the 30S ribosomal translation pre-initiation complex which assembles on the 30S ribosome in the order IF-2 and IF-3, IF-1 and N-formylmethionyl-tRNA(fMet); mRNA recruitment can occur at any time during PIC assembly.

It is found in the plastid. It localises to the chloroplast. In terms of biological role, one of the essential components for the initiation of protein synthesis. Stabilizes the binding of IF-2 and IF-3 on the 30S subunit to which N-formylmethionyl-tRNA(fMet) subsequently binds. Helps modulate mRNA selection, yielding the 30S pre-initiation complex (PIC). Upon addition of the 50S ribosomal subunit IF-1, IF-2 and IF-3 are released leaving the mature 70S translation initiation complex. This chain is Translation initiation factor IF-1, chloroplastic, found in Dioscorea elephantipes (Elephant's foot yam).